A 473-amino-acid chain; its full sequence is Dihydrolipoyl dehydrogenase (473 aa).

FAD-binding positions include 36–45 (ERYDKLGGVC), Lys-54, and Ala-117. Cys-45 and Cys-50 are disulfide-bonded. NAD(+)-binding positions include 182-186 (GSGII), Asp-205, and 270-273 (AIGR). FAD is bound by residues Asp-313 and Ala-321. Residue His-445 is the Proton acceptor of the active site.

It belongs to the class-I pyridine nucleotide-disulfide oxidoreductase family. In terms of assembly, homodimer. FAD is required as a cofactor.

The protein resides in the cytoplasm. The enzyme catalyses N(6)-[(R)-dihydrolipoyl]-L-lysyl-[protein] + NAD(+) = N(6)-[(R)-lipoyl]-L-lysyl-[protein] + NADH + H(+). Lipoamide dehydrogenase is a component of the alpha-ketoacid dehydrogenase complexes. This chain is Dihydrolipoyl dehydrogenase (lpdA), found in Buchnera aphidicola subsp. Acyrthosiphon pisum (strain APS) (Acyrthosiphon pisum symbiotic bacterium).